The primary structure comprises 631 residues: Probable ATP-dependent RNA helicase DDX53 (631 aa).

The region spanning 48–109 (EPPLCFKIKN…EMKAKAKAAI (62 aa)) is the KH domain. A Q motif motif is present at residues 222–250 (RFKDAFQQYPDLLKSIIRVGIVKPTPIQS). ATP-binding positions include lysine 244, glutamine 249, 268-273 (TGTGKT), and histidine 311. The Helicase ATP-binding domain maps to 253–428 (WPIILQGIDL…LSYLKDPMIV (176 aa)). Positions 376-379 (DEAD) match the DEAD box motif. In terms of domain architecture, Helicase C-terminal spans 440-601 (TVKQNIIVTT…SVPEDLVVMA (162 aa)).

It belongs to the DEAD box helicase family. As to expression, expressed in testis. Wide expression in various cancer tissues and cancer cell lines.

It localises to the nucleus. It catalyses the reaction ATP + H2O = ADP + phosphate + H(+). This Homo sapiens (Human) protein is Probable ATP-dependent RNA helicase DDX53 (DDX53).